The following is a 569-amino-acid chain: Vacuolar protein sorting-associated protein 45 homolog (569 aa).

Belongs to the STXBP/unc-18/SEC1 family. In terms of assembly, interacts with both SYP41 or SYP42 and VTI12, but in different domains of the trans-Golgi network. Does not interact on the pervacuolar compartment with VTI11, SYP21 or SYP22, or on the cis-Golgi with SYP31. Interacts at the trans-Golgi network (TGN) with the SYP41/SYP61/VTI12 SNARE complex. As to expression, highly expressed in roots, lower expression in leaves, stems and flowers.

It localises to the golgi apparatus. The protein resides in the trans-Golgi network membrane. It is found in the early endosome. Functionally, involved in the protein transport to the vacuole, probably at the level of vesicle fusion at the trans-Golgi network (TGN) and not in transport from the TGN to the prevacuolar compartment, by promoting the recycling of vacuolar sorting receptors back to the TGN. Involved in early endosomal vesicle trafficking, particularly at the trans-Golgi-network/early endosome (TGN/EE) thus residing in early endocytic route. Together with BIG5/BEN1 required for polar PIN-FORMED (PIN) proteins localization, for their dynamic repolarization, and consequently for auxin activity gradient formation and auxin-related developmental processes (e.g. embryonic patterning, organogenesis and vasculature venation patterning). Necessary for pollen germination and for cell expansion. Binds syntaxins. This chain is Vacuolar protein sorting-associated protein 45 homolog, found in Arabidopsis thaliana (Mouse-ear cress).